Consider the following 150-residue polypeptide: Large ribosomal subunit protein bL9 (150 aa).

Belongs to the bacterial ribosomal protein bL9 family.

Binds to the 23S rRNA. The polypeptide is Large ribosomal subunit protein bL9 (Alteromonas mediterranea (strain DSM 17117 / CIP 110805 / LMG 28347 / Deep ecotype)).